Consider the following 640-residue polypeptide: MHVKKYLLKGLHRLQKGPGYTYKELLVWYCDNTNTHGPKRIICEGPKKKAMWFLLTLLFAALVCWQWGIFIRTYLSWEVSVSLSVGFKTMDFPAVTICNASPFKYSKIKHLLKDLDELMEAVLERILAPELSHANATRNLNFSIWNHTPLVLIDERNPHHPMVLDLFGDNHNGLTSSSASEKICNAHGCKMAMRLCSLNRTQCTFRNFTSATQALTEWYILQATNIFAQVPQQELVEMSYPGEQMILACLFGAEPCNYRNFTSIFYPHYGNCYIFNWGMTEKALPSANPGTEFGLKLILDIGQEDYVPFLASTAGVRLMLHEQRSYPFIRDEGIYAMSGTETSIGVLVDKLQRMGEPYSPCTVNGSEVPVQNFYSDYNTTYSIQACLRSCFQDHMIRNCNCGHYLYPLPRGEKYCNNRDFPDWAHCYSDLQMSVAQRETCIGMCKESCNDTQYKMTISMADWPSEASEDWIFHVLSQERDQSTNITLSRKGIVKLNIYFQEFNYRTIEESAANNIVWLLSNLGGQFGFWMGGSVLCLIEFGEIIIDFVWITIIKLVALAKSLRQRRAQASYAGPPPTVAELVEAHTNFGFQPDTAPRSPNTGPYPSEQALPIPGTPPPNYDSLRLQPLDVIESDSEGDAI.

Residues 1-50 (MHVKKYLLKGLHRLQKGPGYTYKELLVWYCDNTNTHGPKRIICEGPKKKA) lie on the Cytoplasmic side of the membrane. The chain crosses the membrane as a helical span at residues 51–71 (MWFLLTLLFAALVCWQWGIFI). At 72–532 (RTYLSWEVSV…GGQFGFWMGG (461 aa)) the chain is on the extracellular side. 9 cysteine pairs are disulfide-bonded: Cys-98–Cys-272, Cys-184–Cys-189, Cys-196–Cys-203, Cys-249–Cys-256, Cys-361–Cys-448, Cys-386–Cys-444, Cys-390–Cys-440, Cys-399–Cys-426, and Cys-401–Cys-415. N-linked (GlcNAc...) asparagine glycosylation occurs at Asn-260. A helical transmembrane segment spans residues 533-553 (SVLCLIEFGEIIIDFVWITII). Over 554–640 (KLVALAKSLR…IESDSEGDAI (87 aa)) the chain is Cytoplasmic. The tract at residues 590–640 (FQPDTAPRSPNTGPYPSEQALPIPGTPPPNYDSLRLQPLDVIESDSEGDAI) is disordered. The PY motif; recruits WW domain-containing proteins and is thereby required for ubiquitination and inhibition of the channel by NEDD4 and NEDD4L motif lies at 616–620 (PPPNY). Acidic residues predominate over residues 631–640 (IESDSEGDAI). Phosphoserine occurs at positions 633 and 635.

This sequence belongs to the amiloride-sensitive sodium channel (TC 1.A.6) family. SCNN1B subfamily. In terms of assembly, component of the heterotrimeric epithelial sodium channel (ENaC) composed of an alpha/SCNN1A, a beta/SCNN1B and a gamma/SCNN1G subunit. An additional delta/SCNN1D subunit can replace the alpha/SCNN1A subunit to form an alternative channel with specific properties. Interacts with WWP1 (via WW domains). Interacts with WWP2 (via WW domains); inhibits the channel. Interacts with the full-length immature form of PCSK9 (pro-PCSK9); inhibits ENaC by promoting its proteasomal degradation. Interacts (N-glycosylated) with BPIFA1; the interaction is direct and inhibits the proteolytic processing of SCNN1A and SCNN1G and the activation of ENaC. In terms of processing, ubiquitinated. Can be ubiquitinated at multiple sites and undergo monoubiquitination and polyubiquitination. Ubiquitination by NEDD4 or NEDD4L inhibits the ENaC channel through endocytosis, intracellular retention and degradation of its individual subunits. However, some studies could not confirm the ubiquitination of this subunit of the ENaC. Phosphorylated on serine and threonine residues. Aldosterone and insulin increase the basal level of phosphorylation. Post-translationally, N-glycosylated. N-glycosylation is required for interaction with BPIFA1. As to expression, detected in placenta, lung and kidney. Expressed in kidney (at protein level).

It localises to the apical cell membrane. The protein resides in the cytoplasmic vesicle membrane. The enzyme catalyses Na(+)(in) = Na(+)(out). With respect to regulation, originally identified and characterized by its inhibition by the diuretic drug amiloride. Its function is as follows. This is one of the three pore-forming subunits of the heterotrimeric epithelial sodium channel (ENaC), a critical regulator of sodium balance and fluid homeostasis. ENaC operates in epithelial tissues, where it mediates the electrodiffusion of sodium ions from extracellular fluid through the apical membrane of cells, with water following osmotically. It plays a key role in maintaining sodium homeostasis through electrogenic sodium reabsorption in the kidneys. Additionally, ENaC is essential for airway surface liquid homeostasis, which is crucial for proper mucus clearance. This chain is Epithelial sodium channel subunit beta, found in Homo sapiens (Human).